The following is a 274-amino-acid chain: Dermonecrotic toxin SdSicTox-betaIIB1biii (274 aa).

His5 is a catalytic residue. Mg(2+) contacts are provided by Glu25 and Asp27. The Nucleophile role is filled by His41. Cystine bridges form between Cys45–Cys51 and Cys47–Cys190. Asp85 contributes to the Mg(2+) binding site.

It belongs to the arthropod phospholipase D family. Class II subfamily. It depends on Mg(2+) as a cofactor. In terms of tissue distribution, expressed by the venom gland.

Its subcellular location is the secreted. The catalysed reaction is an N-(acyl)-sphingosylphosphocholine = an N-(acyl)-sphingosyl-1,3-cyclic phosphate + choline. It catalyses the reaction an N-(acyl)-sphingosylphosphoethanolamine = an N-(acyl)-sphingosyl-1,3-cyclic phosphate + ethanolamine. It carries out the reaction a 1-acyl-sn-glycero-3-phosphocholine = a 1-acyl-sn-glycero-2,3-cyclic phosphate + choline. The enzyme catalyses a 1-acyl-sn-glycero-3-phosphoethanolamine = a 1-acyl-sn-glycero-2,3-cyclic phosphate + ethanolamine. Dermonecrotic toxins cleave the phosphodiester linkage between the phosphate and headgroup of certain phospholipids (sphingolipid and lysolipid substrates), forming an alcohol (often choline) and a cyclic phosphate. This toxin acts on sphingomyelin (SM). It may also act on ceramide phosphoethanolamine (CPE), lysophosphatidylcholine (LPC) and lysophosphatidylethanolamine (LPE), but not on lysophosphatidylserine (LPS), and lysophosphatidylglycerol (LPG). It acts by transphosphatidylation, releasing exclusively cyclic phosphate products as second products. Induces dermonecrosis, hemolysis, increased vascular permeability, edema, inflammatory response, and platelet aggregation. This Sicarius cf. damarensis (strain GJB-2008) (Six-eyed sand spider) protein is Dermonecrotic toxin SdSicTox-betaIIB1biii.